A 244-amino-acid polypeptide reads, in one-letter code: Methylthioribulose-1-phosphate dehydratase (244 aa).

C104 is a substrate binding site. H122 and H124 together coordinate Zn(2+). E148 functions as the Proton donor/acceptor in the catalytic mechanism. A Zn(2+)-binding site is contributed by H204.

It belongs to the aldolase class II family. MtnB subfamily. It depends on Zn(2+) as a cofactor.

It localises to the cytoplasm. The catalysed reaction is 5-(methylsulfanyl)-D-ribulose 1-phosphate = 5-methylsulfanyl-2,3-dioxopentyl phosphate + H2O. Its pathway is amino-acid biosynthesis; L-methionine biosynthesis via salvage pathway; L-methionine from S-methyl-5-thio-alpha-D-ribose 1-phosphate: step 2/6. Functionally, catalyzes the dehydration of methylthioribulose-1-phosphate (MTRu-1-P) into 2,3-diketo-5-methylthiopentyl-1-phosphate (DK-MTP-1-P). This chain is Methylthioribulose-1-phosphate dehydratase, found in Cryptococcus neoformans var. neoformans serotype D (strain B-3501A) (Filobasidiella neoformans).